The primary structure comprises 366 residues: Histidinol-phosphate aminotransferase (366 aa).

Lys226 carries the post-translational modification N6-(pyridoxal phosphate)lysine.

It belongs to the class-II pyridoxal-phosphate-dependent aminotransferase family. Histidinol-phosphate aminotransferase subfamily. Pyridoxal 5'-phosphate is required as a cofactor.

It catalyses the reaction L-histidinol phosphate + 2-oxoglutarate = 3-(imidazol-4-yl)-2-oxopropyl phosphate + L-glutamate. It functions in the pathway amino-acid biosynthesis; L-histidine biosynthesis; L-histidine from 5-phospho-alpha-D-ribose 1-diphosphate: step 7/9. This Methanosarcina barkeri (strain Fusaro / DSM 804) protein is Histidinol-phosphate aminotransferase.